The primary structure comprises 230 residues: Urease accessory protein UreG (230 aa).

Positions 1-31 (MPPHFLSADSTGQPHRHADRPKRVRTPGEPL) are disordered. Residues 14–25 (PHRHADRPKRVR) show a composition bias toward basic residues. 37-44 (GPVGSGKT) contributes to the GTP binding site.

It belongs to the SIMIBI class G3E GTPase family. UreG subfamily. Homodimer. UreD, UreF and UreG form a complex that acts as a GTP-hydrolysis-dependent molecular chaperone, activating the urease apoprotein by helping to assemble the nickel containing metallocenter of UreC. The UreE protein probably delivers the nickel.

Its subcellular location is the cytoplasm. Its function is as follows. Facilitates the functional incorporation of the urease nickel metallocenter. This process requires GTP hydrolysis, probably effectuated by UreG. This Mycobacterium sp. (strain JLS) protein is Urease accessory protein UreG.